A 1025-amino-acid polypeptide reads, in one-letter code: Multidrug resistance protein MdtC (1025 aa).

12 helical membrane-spanning segments follow: residues 3 to 23, 333 to 353, 360 to 380, 387 to 407, 431 to 451, 463 to 483, 528 to 548, 853 to 873, 875 to 895, 897 to 917, 953 to 973, and 984 to 1004; these read FFALFIYRPVATILLSVAITL, EVEQTLIISVALVILVVFLFL, IIPAVSVPVSLIGTFAAMYLC, LSLMALTIATGFVVDDAIVVL, VGFTVLSMSLSLVAVFLPLLL, FAVTLSVAIGISLLVSLTLTP, LVGVVLLGTIALNIWLYISIP, VILIIAAIATVYIVLGILYES, VHPLTILSTLPSAGVGALLAL, LFNAPFSLIALIGIMLLIGIV, PIMMTTLAALFGALPLVLSGG, and ITIVGGLVMSQLLTLYTTPVV.

Belongs to the resistance-nodulation-cell division (RND) (TC 2.A.6) family. MdtC subfamily. Part of a tripartite efflux system composed of MdtA, MdtB and MdtC. MdtC forms a heteromultimer with MdtB.

Its subcellular location is the cell inner membrane. This Shigella sonnei (strain Ss046) protein is Multidrug resistance protein MdtC.